Here is a 306-residue protein sequence, read N- to C-terminus: Curved DNA-binding protein (306 aa).

Residues 5-69 (DYYAIMGVKP…QRRAEYDQLW (65 aa)) enclose the J domain.

It localises to the cytoplasm. It is found in the nucleoid. In terms of biological role, DNA-binding protein that preferentially recognizes a curved DNA sequence. It is probably a functional analog of DnaJ; displays overlapping activities with DnaJ, but functions under different conditions, probably acting as a molecular chaperone in an adaptive response to environmental stresses other than heat shock. Lacks autonomous chaperone activity; binds native substrates and targets them for recognition by DnaK. Its activity is inhibited by the binding of CbpM. This chain is Curved DNA-binding protein, found in Salmonella paratyphi A (strain ATCC 9150 / SARB42).